The following is a 304-amino-acid chain: Bifunctional phosphoglucose/phosphomannose isomerase (304 aa).

Residues 16–147 (FDKSFKVGKY…KPKIGDVDEA (132 aa)) enclose the SIS domain. D-fructose 6-phosphate-binding residues include Gly35, Ser36, Ser74, Ser76, Thr79, and Arg122. Glu196 (proton acceptor) is an active-site residue. The D-fructose 6-phosphate site is built by His212 and Lys300. The active-site Proton donor is His212. Lys300 functions as the Proton acceptor in the catalytic mechanism.

This sequence belongs to the PGI/PMI family. Homodimer.

The catalysed reaction is alpha-D-glucose 6-phosphate = beta-D-fructose 6-phosphate. It carries out the reaction D-mannose 6-phosphate = D-fructose 6-phosphate. In terms of biological role, dual specificity isomerase that catalyzes the isomerization of both glucose-6-phosphate and mannose-6-phosphate to fructose-6-phosphate. The chain is Bifunctional phosphoglucose/phosphomannose isomerase from Thermoplasma volcanium (strain ATCC 51530 / DSM 4299 / JCM 9571 / NBRC 15438 / GSS1).